The chain runs to 210 residues: Thymidylate kinase (210 aa).

An ATP-binding site is contributed by 11–18; sequence GLEGAGKS.

It belongs to the thymidylate kinase family.

It carries out the reaction dTMP + ATP = dTDP + ADP. In terms of biological role, phosphorylation of dTMP to form dTDP in both de novo and salvage pathways of dTTP synthesis. In Histophilus somni (strain 2336) (Haemophilus somnus), this protein is Thymidylate kinase.